A 463-amino-acid polypeptide reads, in one-letter code: Argininosuccinate lyase (463 aa).

The protein belongs to the lyase 1 family. Argininosuccinate lyase subfamily.

It localises to the cytoplasm. It catalyses the reaction 2-(N(omega)-L-arginino)succinate = fumarate + L-arginine. Its pathway is amino-acid biosynthesis; L-arginine biosynthesis; L-arginine from L-ornithine and carbamoyl phosphate: step 3/3. This is Argininosuccinate lyase from Prochlorococcus marinus (strain NATL1A).